The primary structure comprises 324 residues: Galactosylgalactosylxylosylprotein 3-beta-glucuronosyltransferase 2 (324 aa).

Over 1–2 (MK) the chain is Cytoplasmic. Residues 3–23 (SALCSRFFILLPWILIVIIML) traverse the membrane as a helical; Signal-anchor for type II membrane protein segment. The Lumenal portion of the chain corresponds to 24-324 (DVDPRRPAPQ…YHLDTVNIEV (301 aa)). The interval 50–78 (SRVPLRRSSPGRDAAEKRNESRPQLQPEP) is disordered. An N-linked (GlcNAc...) asparagine glycan is attached at Asn68. Residues 88-90 (PTY), Asp119, Arg156, Arg161, and 186-188 (DDD) contribute to the UDP-alpha-D-glucuronate site. Asp188 lines the Mn(2+) pocket. The interaction with galactose moiety of substrate glycoprotein stretch occupies residues 235–244 (WREDRPFAID). Glu274 acts as the Proton donor/acceptor in catalysis. Asn293 carries an N-linked (GlcNAc...) asparagine glycan. 301–303 (HTR) serves as a coordination point for UDP-alpha-D-glucuronate.

It belongs to the glycosyltransferase 43 family. In terms of assembly, homodimer. The cofactor is Mn(2+). As to expression, expressed in brain, but not in liver and kidney.

It localises to the golgi apparatus membrane. It carries out the reaction 3-O-(beta-D-galactosyl-(1-&gt;3)-beta-D-galactosyl-(1-&gt;4)-beta-D-xylosyl)-L-seryl-[protein] + UDP-alpha-D-glucuronate = 3-O-(beta-D-GlcA-(1-&gt;3)-beta-D-Gal-(1-&gt;3)-beta-D-Gal-(1-&gt;4)-beta-D-Xyl)-L-seryl-[protein] + UDP + H(+). The protein operates within protein modification; protein glycosylation. In terms of biological role, involved in the biosynthesis of L2/HNK-1 carbohydrate epitope on both glycolipids and glycoproteins. This Mus musculus (Mouse) protein is Galactosylgalactosylxylosylprotein 3-beta-glucuronosyltransferase 2 (B3gat2).